A 126-amino-acid chain; its full sequence is Fluoride-specific ion channel FluC (126 aa).

Transmembrane regions (helical) follow at residues 3–23, 37–57, 70–90, and 104–124; these read FAILGFIALGGAVGACARFLV, IGTLTVNVVGSFIMGVLIACV, VIGLGFLGALTTFSTFSMDNV, and NVLLNVILSISAAWIGFHWLM. Residues Gly77 and Thr80 each contribute to the Na(+) site.

It belongs to the fluoride channel Fluc/FEX (TC 1.A.43) family.

It is found in the cell inner membrane. The catalysed reaction is fluoride(in) = fluoride(out). Na(+) is not transported, but it plays an essential structural role and its presence is essential for fluoride channel function. In terms of biological role, fluoride-specific ion channel. Important for reducing fluoride concentration in the cell, thus reducing its toxicity. In Vibrio cholerae serotype O1 (strain ATCC 39541 / Classical Ogawa 395 / O395), this protein is Fluoride-specific ion channel FluC.